The following is a 215-amino-acid chain: Octanoyltransferase (215 aa).

Residues 31-206 (TSAEDEIWLV…QLVKHLDYAE (176 aa)) form the BPL/LPL catalytic domain. Substrate-binding positions include 70–77 (RGGQVTYH), 137–139 (SLG), and 150–152 (GLA). C168 (acyl-thioester intermediate) is an active-site residue.

This sequence belongs to the LipB family.

It localises to the cytoplasm. The enzyme catalyses octanoyl-[ACP] + L-lysyl-[protein] = N(6)-octanoyl-L-lysyl-[protein] + holo-[ACP] + H(+). It functions in the pathway protein modification; protein lipoylation via endogenous pathway; protein N(6)-(lipoyl)lysine from octanoyl-[acyl-carrier-protein]: step 1/2. Its function is as follows. Catalyzes the transfer of endogenously produced octanoic acid from octanoyl-acyl-carrier-protein onto the lipoyl domains of lipoate-dependent enzymes. Lipoyl-ACP can also act as a substrate although octanoyl-ACP is likely to be the physiological substrate. This Pseudomonas fluorescens (strain SBW25) protein is Octanoyltransferase.